Consider the following 311-residue polypeptide: R2-like ligand binding oxidase (311 aa).

Mn(2+) contacts are provided by E68, E101, and H104. The segment at residues 71 to 162 is a cross-link (3-(O4'-tyrosyl)-valine (Val-Tyr)); the sequence is VTQDIQPFMA…AAQVRASVTY (92 aa). E101 contributes to the Fe cation binding site. Fe cation contacts are provided by E167, E202, and H205.

This sequence belongs to the ribonucleoside diphosphate reductase small chain family. R2-like ligand binding oxidase subfamily. As to quaternary structure, homodimer. Requires Fe cation as cofactor. Mn(2+) serves as cofactor.

Probable oxidase that might be involved in lipid metabolism. The chain is R2-like ligand binding oxidase from Mycobacterium avium (strain 104).